The primary structure comprises 127 residues: Holo-[acyl-carrier-protein] synthase (127 aa).

Mg(2+) is bound by residues aspartate 7 and glutamate 56.

This sequence belongs to the P-Pant transferase superfamily. AcpS family. Mg(2+) is required as a cofactor.

It is found in the cytoplasm. It catalyses the reaction apo-[ACP] + CoA = holo-[ACP] + adenosine 3',5'-bisphosphate + H(+). Its function is as follows. Transfers the 4'-phosphopantetheine moiety from coenzyme A to a Ser of acyl-carrier-protein. The sequence is that of Holo-[acyl-carrier-protein] synthase from Onion yellows phytoplasma (strain OY-M).